Here is a 417-residue protein sequence, read N- to C-terminus: Putative plant UBX domain-containing protein 14 (417 aa).

A UBX domain is found at 335–415; sequence DRSVVCSICV…GIANSMISVT (81 aa).

The chain is Putative plant UBX domain-containing protein 14 from Arabidopsis thaliana (Mouse-ear cress).